The sequence spans 186 residues: Peptidyl-tRNA hydrolase (186 aa).

Tyr-14 lines the tRNA pocket. Residue His-19 is the Proton acceptor of the active site. TRNA contacts are provided by Tyr-64, Asn-66, and Asn-112.

The protein belongs to the PTH family. As to quaternary structure, monomer.

The protein resides in the cytoplasm. The catalysed reaction is an N-acyl-L-alpha-aminoacyl-tRNA + H2O = an N-acyl-L-amino acid + a tRNA + H(+). Its function is as follows. Hydrolyzes ribosome-free peptidyl-tRNAs (with 1 or more amino acids incorporated), which drop off the ribosome during protein synthesis, or as a result of ribosome stalling. In terms of biological role, catalyzes the release of premature peptidyl moieties from peptidyl-tRNA molecules trapped in stalled 50S ribosomal subunits, and thus maintains levels of free tRNAs and 50S ribosomes. The polypeptide is Peptidyl-tRNA hydrolase (Geobacillus thermodenitrificans (strain NG80-2)).